A 370-amino-acid polypeptide reads, in one-letter code: Translocating chain-associated membrane protein 2 (370 aa).

The Cytoplasmic segment spans residues 1–22 (MAFRRRTKSYPLFSQEFVIHNH). Residues 23–43 (ADIGFCLVLCVLIGLMFEVTA) form a helical membrane-spanning segment. The Extracellular segment spans residues 44-75 (KTAFLFILPQYNISVPTADSETVHYHYGPKDL). Asn-55 carries N-linked (GlcNAc...) asparagine glycosylation. Residues 76 to 96 (VTILFYIFITIILHAVVQEYI) form a helical membrane-spanning segment. Residues 97-119 (LDKISKRLHLSKVKHSKFNESGQ) lie on the Cytoplasmic side of the membrane. Positions 112-321 (SKFNESGQLV…HSQLRHWREY (210 aa)) constitute a TLC domain. The chain crosses the membrane as a helical span at residues 120–140 (LVVFHFTSVIWCFYVVVTEGY). Residues 141–159 (LTNPRSLWEDYPHVHLPFQ) are Extracellular-facing. A helical membrane pass occupies residues 160-180 (VKFFYLCQLAYWLHALPELYF). At 181 to 191 (QKVRKEEIPRQ) the chain is on the cytoplasmic side. Residues 192–209 (LQYICLYLVHIAGAYLLN) form a helical membrane-spanning segment. Residues 210–214 (LSRLG) are Extracellular-facing. The helical transmembrane segment at 215–235 (LILLLLQYSTEFLFHTARLFY) threads the bilayer. Topologically, residues 236 to 250 (FADENNEKLFSAWAA) are cytoplasmic. A helical transmembrane segment spans residues 251-271 (VFGVTRLFILTLAVLAIGFGL). The Extracellular portion of the chain corresponds to 272 to 287 (ARMENQAFDPEKGNFN). Residues 288 to 308 (TLFCRLCVLLLVCAAQAWLMW) form a helical membrane-spanning segment. Residues 309 to 370 (RFIHSQLRHW…SPRTKKLKSP (62 aa)) lie on the Cytoplasmic side of the membrane. Positions 348–370 (YHENGVVKAENGTSPRTKKLKSP) are disordered.

The protein belongs to the TRAM family. Interacts with SERCA2B and COL1A1.

The protein resides in the membrane. Functionally, necessary for collagen type I synthesis. May couple the activity of the ER Ca(2+) pump SERCA2B with the activity of the translocon. This coupling may increase the local Ca(2+) concentration at the site of collagen synthesis, and a high Ca(2+) concentration may be necessary for the function of molecular chaperones involved in collagen folding. Required for proper insertion of the first transmembrane helix N-terminus of TM4SF20 into the ER lumen, may act as a ceramide sensor for regulated alternative translocation (RAT). The sequence is that of Translocating chain-associated membrane protein 2 (TRAM2) from Homo sapiens (Human).